Consider the following 283-residue polypeptide: Phosphatidylserine decarboxylase proenzyme (283 aa).

Catalysis depends on charge relay system; for autoendoproteolytic cleavage activity residues Asp-89, His-146, and Ser-249. Residue Ser-249 is the Schiff-base intermediate with substrate; via pyruvic acid; for decarboxylase activity of the active site. Ser-249 carries the pyruvic acid (Ser); by autocatalysis modification.

This sequence belongs to the phosphatidylserine decarboxylase family. PSD-B subfamily. Prokaryotic type I sub-subfamily. In terms of assembly, heterodimer of a large membrane-associated beta subunit and a small pyruvoyl-containing alpha subunit. Pyruvate serves as cofactor. In terms of processing, is synthesized initially as an inactive proenzyme. Formation of the active enzyme involves a self-maturation process in which the active site pyruvoyl group is generated from an internal serine residue via an autocatalytic post-translational modification. Two non-identical subunits are generated from the proenzyme in this reaction, and the pyruvate is formed at the N-terminus of the alpha chain, which is derived from the carboxyl end of the proenzyme. The autoendoproteolytic cleavage occurs by a canonical serine protease mechanism, in which the side chain hydroxyl group of the serine supplies its oxygen atom to form the C-terminus of the beta chain, while the remainder of the serine residue undergoes an oxidative deamination to produce ammonia and the pyruvoyl prosthetic group on the alpha chain. During this reaction, the Ser that is part of the protease active site of the proenzyme becomes the pyruvoyl prosthetic group, which constitutes an essential element of the active site of the mature decarboxylase.

The protein resides in the cell membrane. The enzyme catalyses a 1,2-diacyl-sn-glycero-3-phospho-L-serine + H(+) = a 1,2-diacyl-sn-glycero-3-phosphoethanolamine + CO2. The protein operates within phospholipid metabolism; phosphatidylethanolamine biosynthesis; phosphatidylethanolamine from CDP-diacylglycerol: step 2/2. Functionally, catalyzes the formation of phosphatidylethanolamine (PtdEtn) from phosphatidylserine (PtdSer). This Legionella pneumophila (strain Lens) protein is Phosphatidylserine decarboxylase proenzyme.